Consider the following 502-residue polypeptide: UDP-N-acetylmuramate--L-alanine ligase (502 aa).

120 to 126 (GTHGKTS) serves as a coordination point for ATP.

This sequence belongs to the MurCDEF family.

The protein localises to the cytoplasm. The catalysed reaction is UDP-N-acetyl-alpha-D-muramate + L-alanine + ATP = UDP-N-acetyl-alpha-D-muramoyl-L-alanine + ADP + phosphate + H(+). It functions in the pathway cell wall biogenesis; peptidoglycan biosynthesis. In terms of biological role, cell wall formation. This Rhodococcus erythropolis (strain PR4 / NBRC 100887) protein is UDP-N-acetylmuramate--L-alanine ligase.